The chain runs to 226 residues: 2-C-methyl-D-erythritol 4-phosphate cytidylyltransferase (226 aa).

It belongs to the IspD/TarI cytidylyltransferase family. IspD subfamily.

The catalysed reaction is 2-C-methyl-D-erythritol 4-phosphate + CTP + H(+) = 4-CDP-2-C-methyl-D-erythritol + diphosphate. Its pathway is isoprenoid biosynthesis; isopentenyl diphosphate biosynthesis via DXP pathway; isopentenyl diphosphate from 1-deoxy-D-xylulose 5-phosphate: step 2/6. In terms of biological role, catalyzes the formation of 4-diphosphocytidyl-2-C-methyl-D-erythritol from CTP and 2-C-methyl-D-erythritol 4-phosphate (MEP). The polypeptide is 2-C-methyl-D-erythritol 4-phosphate cytidylyltransferase (Parasynechococcus marenigrum (strain WH8102)).